The chain runs to 146 residues: LQYIERLDPEREPGRLTFIVRMGADKIRDKLPELVERSPPPATVAWITDPMHGNTYEAAPVHKTRRFDDVLDEVKGFFEVHKSLGTHPGGIHVELTGDDVTECVGGGDEIFVDDLHQRYETACDPRLNRSQSLDLAFLVAEMYRDQ.

It belongs to the class-II DAHP synthase family. Homodimer.

It catalyses the reaction D-erythrose 4-phosphate + phosphoenolpyruvate + H2O = 7-phospho-2-dehydro-3-deoxy-D-arabino-heptonate + phosphate. It functions in the pathway metabolic intermediate biosynthesis; chorismate biosynthesis; chorismate from D-erythrose 4-phosphate and phosphoenolpyruvate: step 1/7. The polypeptide is Phospho-2-dehydro-3-deoxyheptonate aldolase (Streptomyces lividans).